The sequence spans 208 residues: Na(+)-translocating NADH-quinone reductase subunit D (208 aa).

5 helical membrane passes run 42–62, 72–92, 103–123, 131–151, and 178–198; these read IVMG…ISLV, IIVQ…LLQA, VFVG…AFAM, LIDG…VATV, and NGLF…IWGL.

This sequence belongs to the NqrDE/RnfAE family. As to quaternary structure, composed of six subunits; NqrA, NqrB, NqrC, NqrD, NqrE and NqrF.

The protein localises to the cell inner membrane. The catalysed reaction is a ubiquinone + n Na(+)(in) + NADH + H(+) = a ubiquinol + n Na(+)(out) + NAD(+). Functionally, NQR complex catalyzes the reduction of ubiquinone-1 to ubiquinol by two successive reactions, coupled with the transport of Na(+) ions from the cytoplasm to the periplasm. NqrA to NqrE are probably involved in the second step, the conversion of ubisemiquinone to ubiquinol. This chain is Na(+)-translocating NADH-quinone reductase subunit D, found in Neisseria meningitidis serogroup B (strain ATCC BAA-335 / MC58).